The following is a 147-amino-acid chain: uncharacterized protein (147 aa).

The chain crosses the membrane as a helical span at residues 3 to 23 (APMVGMVVLVVTLGAAVLALS).

The protein to M.tuberculosis Rv1312.

The protein resides in the membrane. This is an uncharacterized protein from Mycobacterium leprae (strain TN).